Consider the following 704-residue polypeptide: MEQLSYQSKLICSDESRHTGCFTTLPIRIHPRDDLADAASRRFVQDWAREMRDGREQSTHFSFSPVGNWSSLIYPEAIPERLGVLAYLSDLGLIHDDGGEGLSIEDAQAEHGELCAALDPSDISSAAPGSRAMKTKKLVSQCMLECISLDRELGLKMLAAFRDVWLAISERNSDKEAQTMEEYLKYRSDNGGMLVFWPMLQFSLGMSISEAEEALVQPIIDAATEGLLLANDYFSWEREYRELQSGQSKRIVSAVDLFIRTKGLSIDDAKEEVKRKIIAAERDFCQRRDDLYTNHPNIPLKLKRWIDCAGLAVSGNHYWCSACPRQNAWKDMSSQSLNGAKRKTSHGATIGMHEAPFKKRKDSSFFGSQPSDDEPSLSEVSSYPFYKPSGLALEAPSKYVSDMPSKGVRSTLIEALNTWLHVPSERLDSIMSVINTLHNASLILDDLEDNSPLRRGYPATHILFGHSQSINTANFMFVRAVQEVAQNLSPNALVALLEELKGLYLGQSWDLYWKHNLACPSEAEYVNMIDHKTGGMFRMLLRIMQAESDVTPQPDFHRLTLLFGRFFQIRDDYMNFQDYTAQKGLCEDLDEGKFSYPVVYCLENHPEYRGYFLSMFRQRPTIATVNACPLSGESKQYLTACLKKSGAFNKTIACLTDMERDLEFEINRLEQQTGETNPMLRLCLAKLSVKGIGRIGEVSPSTSK.

The terpene cyclase stretch occupies residues 1 to 329; it reads MEQLSYQSKL…CSACPRQNAW (329 aa). Asp-96 lines the Mg(2+) pocket. Substrate contacts are provided by residues Asp-96, Asn-231, 235-239, and 325-326; these read SWERE and RQ. Residues 96-100 carry the DDXXD 1 motif; that stretch reads DDGGE. The NSE/DTE motif lies at 231–239; that stretch reads NDYFSWERE. The tract at residues 330-688 is prenyltransferase; that stretch reads KDMSSQSLNG…MLRLCLAKLS (359 aa). Positions 361–380 are disordered; sequence KDSSFFGSQPSDDEPSLSEV. Residues Lys-406, Arg-409, and His-438 each coordinate isopentenyl diphosphate. The Mg(2+) site is built by Asp-445 and Asp-449. Residues 445–449 carry the DDXXD 2 motif; it reads DDLED. Residue Arg-454 participates in dimethylallyl diphosphate binding. Arg-455 is an isopentenyl diphosphate binding site. Dimethylallyl diphosphate is bound by residues Lys-532, Thr-533, Gln-568, Asn-575, Lys-583, and Lys-593.

In the N-terminal section; belongs to the terpene synthase family. It in the C-terminal section; belongs to the FPP/GGPP synthase family. As to quaternary structure, hexamer. The cofactor is Mg(2+).

The catalysed reaction is isopentenyl diphosphate + (2E,6E)-farnesyl diphosphate = (2E,6E,10E)-geranylgeranyl diphosphate + diphosphate. It catalyses the reaction isopentenyl diphosphate + (2E,6E,10E)-geranylgeranyl diphosphate = (2E,6E,10E,14E)-geranylfarnesyl diphosphate + diphosphate. It functions in the pathway secondary metabolite biosynthesis; terpenoid biosynthesis. In terms of biological role, bifunctional terpene synthase; part of the gene cluster that mediates the biosynthesis of terpestacin. The bifunctional terpene synthase tpcA converts isopentenyl diphosphate (IPP) and dimethylallyl diphosphate (DMAPP) into the sesterterpene preterpestacin I. The C-terminal prenyltransferase (PT) domain of tpcA catalyzes formation of GFPP, whereas the N-terminal terpene cyclase (TC) domain catalyzes the cyclization of GFPP into preterpestacin I. The cytochrome P450 monooxygenase tpcB then hydroxylates preterpestacin I to yield 24-hydroxypreterpstacin I (renamed as preterpestacin II) whereas the cytochrome P450 monooxygenase tpcC further hydroxylates preterpestacin II to yield 16,17-dihydroxypreterpestacin II (renamed as preterpestacin III). Finally, the FAD-dependent monooxygenase tpcD converts preterpestacin III into terpestacin. The protein is Preterpestacin I synthase tpcA of Cochliobolus heterostrophus (strain C5 / ATCC 48332 / race O) (Southern corn leaf blight fungus).